The chain runs to 116 residues: Ferredoxin-thioredoxin reductase, catalytic chain (116 aa).

Cysteine 57 serves as a coordination point for [4Fe-4S] cluster. Catalysis depends on cysteine 59, which acts as the Nucleophile. A disulfide bridge links cysteine 59 with cysteine 89. 3 residues coordinate [4Fe-4S] cluster: cysteine 76, cysteine 78, and cysteine 87.

This sequence belongs to the ferredoxin thioredoxin reductase beta subunit family. Heterodimer of subunit A (variable subunit) and subunit B (catalytic subunit). Heterodimeric FTR forms a complex with ferredoxin and thioredoxin. [4Fe-4S] cluster serves as cofactor.

It is found in the plastid. It localises to the chloroplast. The enzyme catalyses [thioredoxin]-disulfide + 2 reduced [2Fe-2S]-[ferredoxin] + 2 H(+) = [thioredoxin]-dithiol + 2 oxidized [2Fe-2S]-[ferredoxin]. In terms of biological role, catalytic subunit of the ferredoxin-thioredoxin reductase (FTR), which catalyzes the two-electron reduction of thioredoxins by the electrons provided by reduced ferredoxin. The protein is Ferredoxin-thioredoxin reductase, catalytic chain (ftrB) of Pyropia yezoensis (Susabi-nori).